Consider the following 665-residue polypeptide: Fermitin family homolog 3 (665 aa).

Tyr11 carries the phosphotyrosine modification. The FERM domain occupies 229–556; sequence WLDSSRCLMQ…SLPDFGISYV (328 aa). Residues 354-453 enclose the PH domain; sequence DHLRIFRPRK…WMAGCRLASK (100 aa). Residue Tyr502 is modified to Phosphotyrosine. Thr589 is subject to Phosphothreonine.

This sequence belongs to the kindlin family. As to quaternary structure, interacts with ITGB1, ITGB2 and ITGB3 (via cytoplasmic tails).

Its subcellular location is the cell projection. The protein localises to the podosome. In terms of biological role, plays a central role in cell adhesion in hematopoietic cells. Acts by activating the integrin beta-1-3 (ITGB1, ITGB2 and ITGB3). Required for integrin-mediated platelet adhesion and leukocyte adhesion to endothelial cells. Required for activation of integrin beta-2 (ITGB2) in polymorphonuclear granulocytes (PMNs). In Bos taurus (Bovine), this protein is Fermitin family homolog 3 (FERMT3).